Reading from the N-terminus, the 301-residue chain is Acetylglutamate kinase (301 aa).

Residues 72–73 (GG), arginine 94, and asparagine 199 contribute to the substrate site.

This sequence belongs to the acetylglutamate kinase family. ArgB subfamily.

The protein resides in the cytoplasm. The catalysed reaction is N-acetyl-L-glutamate + ATP = N-acetyl-L-glutamyl 5-phosphate + ADP. The protein operates within amino-acid biosynthesis; L-arginine biosynthesis; N(2)-acetyl-L-ornithine from L-glutamate: step 2/4. Its function is as follows. Catalyzes the ATP-dependent phosphorylation of N-acetyl-L-glutamate. The sequence is that of Acetylglutamate kinase from Bartonella henselae (strain ATCC 49882 / DSM 28221 / CCUG 30454 / Houston 1) (Rochalimaea henselae).